Consider the following 211-residue polypeptide: RNA chaperone ProQ (211 aa).

A disordered region spans residues 112–148; the sequence is ERRAVEKANNPKANKKRSVHHSGNKSENKKSAGKKFS. Positions 124-134 are enriched in basic residues; that stretch reads ANKKRSVHHSG.

The protein belongs to the ProQ family.

The protein localises to the cytoplasm. Functionally, RNA chaperone with significant RNA binding, RNA strand exchange and RNA duplexing activities. This chain is RNA chaperone ProQ, found in Histophilus somni (strain 2336) (Haemophilus somnus).